The chain runs to 325 residues: GMP reductase (325 aa).

Residue C174 is the Thioimidate intermediate of the active site. NADP(+) is bound at residue 203-226 (IVADGGIRNNGDIAKSIRFGASMC).

It belongs to the IMPDH/GMPR family. GuaC type 2 subfamily.

The enzyme catalyses IMP + NH4(+) + NADP(+) = GMP + NADPH + 2 H(+). Catalyzes the irreversible NADPH-dependent deamination of GMP to IMP. It functions in the conversion of nucleobase, nucleoside and nucleotide derivatives of G to A nucleotides, and in maintaining the intracellular balance of A and G nucleotides. This Ligilactobacillus salivarius (strain UCC118) (Lactobacillus salivarius) protein is GMP reductase.